Here is a 270-residue protein sequence, read N- to C-terminus: Methylthioribulose-1-phosphate dehydratase (270 aa).

Cysteine 122 contacts substrate. Zn(2+) is bound by residues histidine 140 and histidine 142. Glutamate 165 functions as the Proton donor/acceptor in the catalytic mechanism. Residue histidine 230 coordinates Zn(2+).

Belongs to the aldolase class II family. MtnB subfamily. Zn(2+) serves as cofactor.

It localises to the cytoplasm. It catalyses the reaction 5-(methylsulfanyl)-D-ribulose 1-phosphate = 5-methylsulfanyl-2,3-dioxopentyl phosphate + H2O. It functions in the pathway amino-acid biosynthesis; L-methionine biosynthesis via salvage pathway; L-methionine from S-methyl-5-thio-alpha-D-ribose 1-phosphate: step 2/6. Catalyzes the dehydration of methylthioribulose-1-phosphate (MTRu-1-P) into 2,3-diketo-5-methylthiopentyl-1-phosphate (DK-MTP-1-P). The chain is Methylthioribulose-1-phosphate dehydratase from Candida albicans (strain SC5314 / ATCC MYA-2876) (Yeast).